We begin with the raw amino-acid sequence, 171 residues long: Ribosome maturation factor RimM (171 aa).

The PRC barrel domain occupies 96–169 (EGEFFIADMI…KMIIDPIKGM (74 aa)).

Belongs to the RimM family. Binds ribosomal protein uS19.

It localises to the cytoplasm. An accessory protein needed during the final step in the assembly of 30S ribosomal subunit, possibly for assembly of the head region. Essential for efficient processing of 16S rRNA. May be needed both before and after RbfA during the maturation of 16S rRNA. It has affinity for free ribosomal 30S subunits but not for 70S ribosomes. The polypeptide is Ribosome maturation factor RimM (Clostridioides difficile (strain 630) (Peptoclostridium difficile)).